The following is an 80-amino-acid chain: Metallothionein-like protein type 2, MT2-4/MT2-25 (80 aa).

Belongs to the metallothionein superfamily. Type 15 family.

In terms of biological role, metallothioneins have a high content of cysteine residues that bind various heavy metals. This Brassica juncea (Indian mustard) protein is Metallothionein-like protein type 2, MT2-4/MT2-25.